The following is a 319-amino-acid chain: Urease accessory protein UreD (319 aa).

The interval 284–319 is disordered; the sequence is RLSTPQPPREWPLQEEGTFSNERFTKDHQSPSASPH.

Belongs to the UreD family. UreD, UreF and UreG form a complex that acts as a GTP-hydrolysis-dependent molecular chaperone, activating the urease apoprotein by helping to assemble the nickel containing metallocenter of UreC. The UreE protein probably delivers the nickel.

Its subcellular location is the cytoplasm. Functionally, required for maturation of urease via the functional incorporation of the urease nickel metallocenter. The protein is Urease accessory protein UreD of Prochlorococcus marinus (strain MIT 9313).